Here is a 737-residue protein sequence, read N- to C-terminus: Translation initiation factor IF-2 (737 aa).

Residues 55 to 152 (KKKEHIQHNK…PVPPRKNKPL (98 aa)) form a disordered region. A compositionally biased stretch (basic and acidic residues) spans 60-70 (IQHNKNKDNFH). Positions 88–98 (KNVHKNNRKRS) are enriched in basic residues. Residues 105–121 (NNNAKNGQRNNRNNRSN) are compositionally biased toward low complexity. Basic residues predominate over residues 122-131 (NKFKNKRNNN). A compositionally biased stretch (low complexity) spans 132 to 142 (NKRNNNFKKGN). Residues 238–407 (KRPPVVTIMG…LLEAEMLELH (170 aa)) form the tr-type G domain. Positions 247 to 254 (GHVDHGKT) are G1. A GTP-binding site is contributed by 247–254 (GHVDHGKT). Positions 272–276 (GITQH) are G2. Residues 293–296 (DTPG) form a G3 region. Residues 293–297 (DTPGH) and 347–350 (NKID) each bind GTP. The interval 347-350 (NKID) is G4. The interval 383–385 (SAK) is G5.

It belongs to the TRAFAC class translation factor GTPase superfamily. Classic translation factor GTPase family. IF-2 subfamily.

It is found in the cytoplasm. Functionally, one of the essential components for the initiation of protein synthesis. Protects formylmethionyl-tRNA from spontaneous hydrolysis and promotes its binding to the 30S ribosomal subunits. Also involved in the hydrolysis of GTP during the formation of the 70S ribosomal complex. The polypeptide is Translation initiation factor IF-2 (Ligilactobacillus salivarius (strain UCC118) (Lactobacillus salivarius)).